Reading from the N-terminus, the 141-residue chain is Hemoglobin subunit alpha-A (141 aa).

Residues 1 to 141 (VLSAADKNNV…VGNVLTAKYR (141 aa)) enclose the Globin domain. Histidine 58 provides a ligand contact to O2. Residue histidine 87 participates in heme b binding.

This sequence belongs to the globin family. In terms of assembly, heterotetramer of two alpha chains and two beta chains. As to expression, red blood cells.

In terms of biological role, involved in oxygen transport from the lung to the various peripheral tissues. In Francolinus pondicerianus (Grey francolin), this protein is Hemoglobin subunit alpha-A (HBAA).